Reading from the N-terminus, the 374-residue chain is MASRNIWRVRRNFLFDLRGWVPQYSAEVFLKSIPFRPFSVECNSKDGENGDLLNNLLTMGVDVDMARRRQPGVFNKAVTNEQELKMFLLSKGASDKVIGSIISRYPRAITRTPESLSKRWDLWREIMASDLEIVNILERSPESFFRSNNNLNLENNIKFLCSVGLTHKCLCRLLTSAPRTFSNSLNLNKQMVEFLQETGISLGHNNPTDFVRKIISKNPSILIQSTKRVKTNIEFLQSTFNLDKEDLLLLICGPGARILDLSNDCTKRNYTNIKKRLLSLGCTEEEVQKFVLSYLNMIFLSEKKFNDKIDCLLEEKISTSQILENPRVLDSSIHTLKTRIRELAHAGYDVSTSSIALLSWSQRRYEAKLKRLSG.

The transit peptide at 1–37 (MASRNIWRVRRNFLFDLRGWVPQYSAEVFLKSIPFRP) directs the protein to the mitochondrion. 5 interaction with DNA regions span residues 146-147 (RS), 224-228 (QSTKR), 301-308 (SEKKFNDK), 332-335 (SIHT), and 361-368 (SQRRYEAK).

Belongs to the mTERF family. As to quaternary structure, monomer. Is a phosphoprotein. While the DNA-binding activity is unaffected by the phosphorylation/dephosphorylation state, only the phosphorylated form of the protein is active for termination activity. Functioning seems to be regulated by phosphorylation.

The protein localises to the mitochondrion. Functionally, transcription termination factor. Binds to a 28 bp region within the tRNA(Leu(uur)) gene at a position immediately adjacent to and downstream of the 16S rRNA gene; this region comprises a tridecamer sequence critical for directing accurate termination. Binds DNA along the major grove and promotes DNA bending and partial unwinding. Promotes base flipping. Transcription termination activity appears to be polarized with highest specificity for transcripts initiated on the light strand. The chain is Transcription termination factor 1, mitochondrial (Mterf1) from Rattus norvegicus (Rat).